A 159-amino-acid chain; its full sequence is U-actitoxin-Avd13b (159 aa).

Residues 1-18 form the signal peptide; it reads MKSIFLVFFAVCLVKAEA. Residues 19 to 26 constitute a propeptide that is removed on maturation; that stretch reads GKGRKREP. Disulfide bonds link C33-C45 and C36-C52. Residues 59 to 60 constitute a propeptide that is removed on maturation; it reads EP. Disulfide bonds link C67–C79 and C70–C86. Positions 93-94 are excised as a propeptide; that stretch reads EP. Cystine bridges form between C101-C113 and C104-C120. The propeptide occupies 127–128; that stretch reads EP. Cystine bridges form between C135–C147 and C138–C154.

It belongs to the sea anemone BBH family.

The protein localises to the secreted. Its subcellular location is the nematocyst. Inhibits ion channels. This Anemonia viridis (Snakelocks anemone) protein is U-actitoxin-Avd13b.